Here is a 143-residue protein sequence, read N- to C-terminus: Transcriptional regulator MraZ (143 aa).

SpoVT-AbrB domains follow at residues 5–47 (THTP…PMQE) and 76–119 (ASSE…DLRT).

Belongs to the MraZ family. Forms oligomers.

Its subcellular location is the cytoplasm. The protein localises to the nucleoid. This is Transcriptional regulator MraZ from Kineococcus radiotolerans (strain ATCC BAA-149 / DSM 14245 / SRS30216).